We begin with the raw amino-acid sequence, 634 residues long: ABC transporter B family member 29, chloroplastic (634 aa).

Residues 1 to 51 (MSFLLLTPPPCLLIPPPPLSHRRSSSLFLKHPFQPSPRPLSFCKPSALRLR) constitute a chloroplast transit peptide. 6 helical membrane-spanning segments follow: residues 75-95 (TVLLGWLCSCVSVVSLSQIVP), 119-139 (LVLAGLVLAKVVAYYLQQAFL), 195-215 (LLNTVVPSAIQISVMTAHMIV), 219-239 (ALTLVSAMVIPSVALLIAYLG), 307-327 (IVQVMYLGSLSIFCVGAVILA), and 330-350 (SLSSSAIVSFVASLAFLIDPV). In terms of domain architecture, ABC transmembrane type-1 spans 77-362 (LLGWLCSCVS…LGKAYNELKQ (286 aa)). Positions 396–633 (VELCDISFKY…KDSLTSAGLV (238 aa)) constitute an ABC transporter domain. ATP is bound at residue 430–437 (GPSGGGKT).

Belongs to the ABC transporter superfamily. ABCB family. Multidrug resistance exporter (TC 3.A.1.201) subfamily.

Its subcellular location is the plastid. The protein resides in the chloroplast membrane. The sequence is that of ABC transporter B family member 29, chloroplastic (ABCB29) from Arabidopsis thaliana (Mouse-ear cress).